Consider the following 298-residue polypeptide: Aspartate carbamoyltransferase catalytic subunit (298 aa).

The carbamoyl phosphate site is built by Arg-50 and Thr-51. Lys-79 is an L-aspartate binding site. Carbamoyl phosphate-binding residues include Arg-100, His-128, and Gln-131. The L-aspartate site is built by Arg-160 and Arg-221. The carbamoyl phosphate site is built by Leu-260 and Pro-261.

This sequence belongs to the aspartate/ornithine carbamoyltransferase superfamily. ATCase family. Heterooligomer of catalytic and regulatory chains.

It carries out the reaction carbamoyl phosphate + L-aspartate = N-carbamoyl-L-aspartate + phosphate + H(+). Its pathway is pyrimidine metabolism; UMP biosynthesis via de novo pathway; (S)-dihydroorotate from bicarbonate: step 2/3. In terms of biological role, catalyzes the condensation of carbamoyl phosphate and aspartate to form carbamoyl aspartate and inorganic phosphate, the committed step in the de novo pyrimidine nucleotide biosynthesis pathway. The protein is Aspartate carbamoyltransferase catalytic subunit of Methanoculleus marisnigri (strain ATCC 35101 / DSM 1498 / JR1).